We begin with the raw amino-acid sequence, 109 residues long: U4-lycotoxin-Ls1a (109 aa).

The N-terminal stretch at 1 to 22 (MKVLVLFSVLFLTLFSYSSTEA) is a signal peptide. A propeptide spanning residues 23–44 (IDELDSDAEEDMLSLMANEQVR) is cleaved from the precursor. Positions 45–88 (AKACTPRLHDCSHDRHSCCRGELFKDVCYCFYPEGEDKTEVCSC) are knottin domain. Disulfide bonds link Cys-48/Cys-63, Cys-55/Cys-72, Cys-62/Cys-88, and Cys-74/Cys-86. A linear cationic cytotoxin domain region spans residues 89–108 (QQPKSHKYIEKVVDKAKTVV).

It belongs to the neurotoxin 19 (CSTX) family. 05 (U4-Lctx) subfamily. In terms of tissue distribution, expressed by the venom gland.

Its subcellular location is the secreted. In terms of biological role, enhances the high-affinity desensitization of human P2RX3 purinoceptors. This is U4-lycotoxin-Ls1a from Lycosa singoriensis (Wolf spider).